The chain runs to 247 residues: 2,3-bisphosphoglycerate-dependent phosphoglycerate mutase (247 aa).

Substrate contacts are provided by residues 8 to 15 (RHGESTWN), 21 to 22 (TG), Arg60, 87 to 90 (ERHY), Lys98, 114 to 115 (RR), and 183 to 184 (GN). The Tele-phosphohistidine intermediate role is filled by His9. Glu87 serves as the catalytic Proton donor/acceptor.

Belongs to the phosphoglycerate mutase family. BPG-dependent PGAM subfamily. In terms of assembly, homodimer.

The enzyme catalyses (2R)-2-phosphoglycerate = (2R)-3-phosphoglycerate. The protein operates within carbohydrate degradation; glycolysis; pyruvate from D-glyceraldehyde 3-phosphate: step 3/5. In terms of biological role, catalyzes the interconversion of 2-phosphoglycerate and 3-phosphoglycerate. The sequence is that of 2,3-bisphosphoglycerate-dependent phosphoglycerate mutase from Acidovorax sp. (strain JS42).